The following is a 122-amino-acid chain: Large ribosomal subunit protein uL14 (122 aa).

It belongs to the universal ribosomal protein uL14 family. As to quaternary structure, part of the 50S ribosomal subunit. Forms a cluster with proteins L3 and L19. In the 70S ribosome, L14 and L19 interact and together make contacts with the 16S rRNA in bridges B5 and B8.

Its function is as follows. Binds to 23S rRNA. Forms part of two intersubunit bridges in the 70S ribosome. The protein is Large ribosomal subunit protein uL14 of Caldicellulosiruptor saccharolyticus (strain ATCC 43494 / DSM 8903 / Tp8T 6331).